The primary structure comprises 432 residues: Glutamate-1-semialdehyde 2,1-aminomutase 1 (432 aa).

K268 carries the N6-(pyridoxal phosphate)lysine modification.

The protein belongs to the class-III pyridoxal-phosphate-dependent aminotransferase family. HemL subfamily. Homodimer. Pyridoxal 5'-phosphate is required as a cofactor.

Its subcellular location is the cytoplasm. The enzyme catalyses (S)-4-amino-5-oxopentanoate = 5-aminolevulinate. It participates in porphyrin-containing compound metabolism; protoporphyrin-IX biosynthesis; 5-aminolevulinate from L-glutamyl-tRNA(Glu): step 2/2. This chain is Glutamate-1-semialdehyde 2,1-aminomutase 1, found in Bacillus licheniformis (strain ATCC 14580 / DSM 13 / JCM 2505 / CCUG 7422 / NBRC 12200 / NCIMB 9375 / NCTC 10341 / NRRL NRS-1264 / Gibson 46).